Here is a 393-residue protein sequence, read N- to C-terminus: Anhydro-N-acetylmuramic acid kinase (393 aa).

9-16 (GTSADGVD) contacts ATP.

This sequence belongs to the anhydro-N-acetylmuramic acid kinase family.

The enzyme catalyses 1,6-anhydro-N-acetyl-beta-muramate + ATP + H2O = N-acetyl-D-muramate 6-phosphate + ADP + H(+). It participates in amino-sugar metabolism; 1,6-anhydro-N-acetylmuramate degradation. The protein operates within cell wall biogenesis; peptidoglycan recycling. Its function is as follows. Catalyzes the specific phosphorylation of 1,6-anhydro-N-acetylmuramic acid (anhMurNAc) with the simultaneous cleavage of the 1,6-anhydro ring, generating MurNAc-6-P. Is required for the utilization of anhMurNAc either imported from the medium or derived from its own cell wall murein, and thus plays a role in cell wall recycling. The polypeptide is Anhydro-N-acetylmuramic acid kinase (Acidithiobacillus ferrooxidans (strain ATCC 23270 / DSM 14882 / CIP 104768 / NCIMB 8455) (Ferrobacillus ferrooxidans (strain ATCC 23270))).